The sequence spans 311 residues: CARD domain-containing protein E10 (311 aa).

Positions 21 to 110 constitute a CARD domain; that stretch reads IWDVERLCLE…EHLVDLLERA (90 aa). 3 disordered regions span residues 125–181, 203–230, and 243–311; these read ESGA…GGVY, GAGR…GGRD, and IPEP…FFCC. A compositionally biased stretch (polar residues) spans 140 to 152; the sequence is EDNSGYTALLPTN. Positions 252-272 are enriched in gly residues; the sequence is SGGGGRGGGVRYDAGGDGRLG.

Its subcellular location is the host cell membrane. Functionally, activates host NF-kappa-B and JNK pathways. Induces hyperphosphorylation and redistribution of host bcl-10 from the cytoplasm to the plasma membrane. The inhibitory effect of cellular bcl-10 on NF-kappa-B pathway is then overcome allowing NF-kappa-B activation. The protein is CARD domain-containing protein E10 (E10) of Equus caballus (Horse).